Reading from the N-terminus, the 1496-residue chain is Carbamoyl-phosphate synthase [ammonia], mitochondrial (1496 aa).

The N-terminal 33 residues, 1–33 (MTRILSVFKTAKTGVLNAAAHRYRGFSKAGVRL), are a transit peptide targeting the mitochondrion. The tract at residues 34 to 214 (MSVKAQTANL…TKVFGKGNPV (181 aa)) is anthranilate phosphoribosyltransferase homolog. The region spanning 215-401 (RIVAVDCGVK…MSLIKKGKGT (187 aa)) is the Glutamine amidotransferase type-1 domain. The active-site For GATase activity is Cys290. 2 consecutive ATP-grasp domains span residues 548–740 (SDKL…KIAL) and 1090–1281 (SAVL…KVMI). The MGS-like domain maps to 1352–1496 (FKLPQKGILI…YRQFGGAKPS (145 aa)). The N-acetyl-L-glutamate site is built by Thr1388, Thr1391, Trp1407, Asn1433, Asn1436, and Asn1445.

It is found in the mitochondrion. It carries out the reaction hydrogencarbonate + NH4(+) + 2 ATP = carbamoyl phosphate + 2 ADP + phosphate + 2 H(+). Its activity is regulated as follows. Requires N-acetyl-L-glutamate (NAG) as an allosteric activator. In terms of biological role, involved in the urea cycle of ureotelic animals where the enzyme plays an important role in removing excess ammonia from the cell. This is Carbamoyl-phosphate synthase [ammonia], mitochondrial from Aquarana catesbeiana (American bullfrog).